Consider the following 40-residue polypeptide: Dolichyl-diphosphooligosaccharide--protein glycosyltransferase subunit 4 (40 aa).

Over 1 to 4 the chain is Lumenal; the sequence is MITD. A helical membrane pass occupies residues 5-25; it reads VQLAIFSNVLGVFLFLLVVAY. The Cytoplasmic segment spans residues 26-40; the sequence is HYINANTGKPSAKAK.

It belongs to the OST4 family. Component of the oligosaccharyltransferase (OST) complex.

It is found in the endoplasmic reticulum membrane. Functionally, subunit of the oligosaccharyl transferase (OST) complex that catalyzes the initial transfer of a defined glycan (Glc(3)Man(9)GlcNAc(2) in eukaryotes) from the lipid carrier dolichol-pyrophosphate to an asparagine residue within an Asn-X-Ser/Thr consensus motif in nascent polypeptide chains, the first step in protein N-glycosylation. N-glycosylation occurs cotranslationally and the complex associates with the Sec61 complex at the channel-forming translocon complex that mediates protein translocation across the endoplasmic reticulum (ER). All subunits are required for a maximal enzyme activity. This chain is Dolichyl-diphosphooligosaccharide--protein glycosyltransferase subunit 4, found in Drosophila erecta (Fruit fly).